A 208-amino-acid polypeptide reads, in one-letter code: Protein Nef (208 aa).

Residue G2 is the site of N-myristoyl glycine; by host attachment. S6 is modified (phosphoserine; by host). The interval E64–E67 is acidic; interacts with host PACS1 and PACS2; stabilizes the interaction of NEF/MHC-I with host AP1M1; necessary for MHC-I internalization. An SH3-binding; interaction with Src family tyrosine kinases region spans residues P71–P80. A PxxP; stabilizes the interaction of NEF/MHC-I with host AP1M1; necessary for MHC-I internalization motif is present at residues P74–P77. Positions D110 to W126 are mediates dimerization, Nef-PTE1 interaction. The segment at V150–V182 is binding to ATP6V1H. Positions L166–L167 match the Dileucine internalization motif; necessary for CD4 internalization motif. The Diacidic; necessary for CD4 internalization signature appears at D176 to D177.

It belongs to the lentivirus primate group Nef protein family. In terms of assembly, monomer; cytosolic form. Homodimer; membrane bound form. Interacts with Nef associated p21-activated kinase (PAK2); this interaction activates PAK2. Associates with the Nef-MHC-I-AP1 complex; this complex is required for MHC-I internalization. Interacts (via C-terminus) with host PI3-kinase. Interacts with host PACS1; this interaction seems to be weak. Interacts with host PACS2. Interacts with host LCK and MAPK3; these interactions inhibit the kinase activity of the latter. Interacts with host ATP6V1H; this interaction may play a role in CD4 endocytosis. Associates with the CD4-Nef-AP2 complex; this complex is required for CD4 internalization. Interacts with host AP2 subunit alpha and AP2 subunit sigma2. Interacts with TCR-zeta chain; this interaction up-regulates the Fas ligand (FasL) surface expression. Interacts with host HCK, LYN, and SRC; these interactions activate the Src family kinases. Interacts with MAP3K5; this interaction inhibits the Fas and TNFR-mediated death signals. Interacts with beta-COP and PTE1. Interacts with human RACK1; this increases Nef phosphorylation by PKC. Interacts with TP53; this interaction decreases the half-life of TP53, protecting the infected cell against p53-mediated apoptosis. The virion-associated Nef proteins are cleaved by the viral protease to release the soluble C-terminal core protein. Nef is probably cleaved concomitantly with viral structural proteins on maturation of virus particles. Post-translationally, myristoylated. In terms of processing, phosphorylated on serine residues, probably by host PKCdelta and theta.

The protein resides in the host cell membrane. It is found in the virion. It localises to the secreted. Its subcellular location is the host Golgi apparatus membrane. Factor of infectivity and pathogenicity, required for optimal virus replication. Alters numerous pathways of T-lymphocyte function and down-regulates immunity surface molecules in order to evade host defense and increase viral infectivity. Alters the functionality of other immunity cells, like dendritic cells, monocytes/macrophages and NK cells. In terms of biological role, in infected CD4(+) T-lymphocytes, down-regulates the surface MHC-I, mature MHC-II, CD4, CD28, CCR5 and CXCR4 molecules. Mediates internalization and degradation of host CD4 through the interaction of with the cytoplasmic tail of CD4, the recruitment of AP-2 (clathrin adapter protein complex 2), internalization through clathrin coated pits, and subsequent transport to endosomes and lysosomes for degradation. Diverts host MHC-I molecules to the trans-Golgi network-associated endosomal compartments by an endocytic pathway to finally target them for degradation. MHC-I down-regulation may involve AP-1 (clathrin adapter protein complex 1) or possibly Src family kinase-ZAP70/Syk-PI3K cascade recruited by PACS2. In consequence infected cells are masked for immune recognition by cytotoxic T-lymphocytes. Decreasing the number of immune receptors also prevents reinfection by more HIV particles (superinfection). Down-regulates host SERINC3 and SERINC5 thereby excluding these proteins from the viral particles. Virion infectivity is drastically higher when SERINC3 or SERINC5 are excluded from the viral envelope, because these host antiviral proteins impair the membrane fusion event necessary for subsequent virion penetration. Its function is as follows. Bypasses host T-cell signaling by inducing a transcriptional program nearly identical to that of anti-CD3 cell activation. Interaction with TCR-zeta chain up-regulates the Fas ligand (FasL). Increasing surface FasL molecules and decreasing surface MHC-I molecules on infected CD4(+) cells send attacking cytotoxic CD8+ T-lymphocytes into apoptosis. Functionally, plays a role in optimizing the host cell environment for viral replication without causing cell death by apoptosis. Protects the infected cells from apoptosis in order to keep them alive until the next virus generation is ready to strike. Inhibits the Fas and TNFR-mediated death signals by blocking MAP3K5/ASK1. Decreases the half-life of TP53, protecting the infected cell against p53-mediated apoptosis. Inhibits the apoptotic signals regulated by the Bcl-2 family proteins through the formation of a Nef/PI3-kinase/PAK2 complex that leads to activation of PAK2 and induces phosphorylation of host BAD. Extracellular Nef protein targets CD4(+) T-lymphocytes for apoptosis by interacting with CXCR4 surface receptors. This chain is Protein Nef, found in Human immunodeficiency virus type 1 group M subtype B (isolate MN) (HIV-1).